Here is a 270-residue protein sequence, read N- to C-terminus: ATP synthase subunit a (270 aa).

Helical transmembrane passes span 38–58 (VHID…GIFY), 98–118 (IAPL…MDLV), 143–163 (DVNI…YYSI), 208–228 (LFGN…MLPW), and 239–259 (AIFH…LTIV).

Belongs to the ATPase A chain family. As to quaternary structure, F-type ATPases have 2 components, CF(1) - the catalytic core - and CF(0) - the membrane proton channel. CF(1) has five subunits: alpha(3), beta(3), gamma(1), delta(1), epsilon(1). CF(0) has three main subunits: a(1), b(2) and c(9-12). The alpha and beta chains form an alternating ring which encloses part of the gamma chain. CF(1) is attached to CF(0) by a central stalk formed by the gamma and epsilon chains, while a peripheral stalk is formed by the delta and b chains.

The protein resides in the cell inner membrane. In terms of biological role, key component of the proton channel; it plays a direct role in the translocation of protons across the membrane. This is ATP synthase subunit a from Vibrio alginolyticus.